The primary structure comprises 211 residues: Endo-1,4-beta-xylanase 5 (211 aa).

A signal peptide spans 1–16 (MKVTAAFASLLLTAFA). One can recognise a GH11 domain in the interval 19 to 210 (APEPVLVSRS…GVGSASVTIS (192 aa)). Residue glutamate 106 is the Nucleophile of the active site. The active-site Proton donor is glutamate 197.

Belongs to the glycosyl hydrolase 11 (cellulase G) family.

The protein resides in the secreted. It catalyses the reaction Endohydrolysis of (1-&gt;4)-beta-D-xylosidic linkages in xylans.. The protein operates within glycan degradation; xylan degradation. Its function is as follows. Endo-1,4-beta-xylanase involved in the hydrolysis of xylan, a major structural heterogeneous polysaccharide found in plant biomass representing the second most abundant polysaccharide in the biosphere, after cellulose. The sequence is that of Endo-1,4-beta-xylanase 5 (XYN5) from Aspergillus niger.